Consider the following 206-residue polypeptide: Proteasome subunit beta type-2 (206 aa).

This sequence belongs to the peptidase T1B family. In terms of assembly, the 26S proteasome consists of a 20S proteasome core and two 19S regulatory subunits. The 20S proteasome core is composed of 28 subunits that are arranged in four stacked rings, resulting in a barrel-shaped structure. The two end rings are each formed by seven alpha subunits, and the two central rings are each formed by seven beta subunits. The catalytic chamber with the active sites is on the inside of the barrel.

It localises to the cytoplasm. Its subcellular location is the nucleus. In terms of biological role, non-catalytic component of the proteasome, a multicatalytic proteinase complex which is characterized by its ability to cleave peptides with Arg, Phe, Tyr, Leu, and Glu adjacent to the leaving group at neutral or slightly basic pH. The proteasome has an ATP-dependent proteolytic activity. This is Proteasome subunit beta type-2 (PSB4) from Trypanosoma brucei brucei.